We begin with the raw amino-acid sequence, 49 residues long: Delta-actitoxin-Axm1a (49 aa).

Intrachain disulfides connect C4/C46, C6/C36, and C29/C47.

Belongs to the sea anemone sodium channel inhibitory toxin family. Type I subfamily.

Its subcellular location is the secreted. The protein localises to the nematocyst. Binds specifically to voltage-gated sodium channels (Nav) (site 3), thereby delaying their inactivation. This toxin retains the greatest capacity to discriminate between the cardiac (Nav1.5/SCN5A) and neuronal sodium channels (2.5 nM versus 120 nM, when electrophysiologically tested and 14 nM versus 400 nM, when tested by ion flux), whereas its paralog Anthopleurin-B has the highest affinity of all anemone toxins for the mammalian sodium channel. Its ability to differentiate between cardiac and skeletal channels appears to be associated with domain 4 of the channel. This toxin does not slow or inhibit closed-state inactivation of cardiac sodium channels, but selectively modifies inactivation from the open-state. It does not display phospholipid-binding activities, suggesting that the domain IV S3-S4 linker is located at the extracellular surface and not buried in the phospholipid bilayer. The polypeptide is Delta-actitoxin-Axm1a (Anthopleura xanthogrammica (Giant green sea anemone)).